A 317-amino-acid polypeptide reads, in one-letter code: Large ribosomal subunit protein uL10 (317 aa).

Tyr-24 is modified (phosphotyrosine). Thr-59 carries the phosphothreonine modification. Lys-264 is covalently cross-linked (Glycyl lysine isopeptide (Lys-Gly) (interchain with G-Cter in ubiquitin)). The disordered stretch occupies residues 294–317 (APAKVEAKEESEESDEDMGFGLFD). Lys-297 is covalently cross-linked (Glycyl lysine isopeptide (Lys-Gly) (interchain with G-Cter in SUMO1); alternate). Lys-297 is covalently cross-linked (Glycyl lysine isopeptide (Lys-Gly) (interchain with G-Cter in SUMO2); alternate). A compositionally biased stretch (acidic residues) spans 302–311 (EESEESDEDM). A phosphoserine mark is found at Ser-304 and Ser-307.

Belongs to the universal ribosomal protein uL10 family. In terms of assembly, P0 forms a pentameric complex by interaction with dimers of P1 and P2. Identified in a IGF2BP1-dependent mRNP granule complex containing untranslated mRNAs. Interacts with APEX1. Interacts with FMR1 isoform 6. In terms of processing, ubiquitinated at Lys-264 by RNF14 and RNF25 in response to ribosome collisions (ribosome stalling).

The protein resides in the nucleus. The protein localises to the cytoplasm. Its function is as follows. Ribosomal protein P0 is the functional equivalent of E.coli protein L10. The polypeptide is Large ribosomal subunit protein uL10 (RPLP0) (Homo sapiens (Human)).